Consider the following 86-residue polypeptide: Putative membrane protein insertion efficiency factor (86 aa).

Belongs to the UPF0161 family.

It localises to the cell inner membrane. Could be involved in insertion of integral membrane proteins into the membrane. The polypeptide is Putative membrane protein insertion efficiency factor (Pseudomonas aeruginosa (strain UCBPP-PA14)).